The primary structure comprises 510 residues: Protein ERGIC-53 (510 aa).

A signal peptide spans 1-30 (MAGSRRRGLQARVRPLFCALLLSLSRFVGG). Residues 31–477 (DGVGGDPAAG…ELPPFPSCLS (447 aa)) lie on the Lumenal side of the membrane. In terms of domain architecture, L-type lectin-like spans 44-267 (RRFEYKYSFK…DVLSFLTFQL (224 aa)). A carbohydrate is bound by residues Ser-88 and Asp-121. Residues Asp-152, Phe-154, and Asn-156 each coordinate Ca(2+). A carbohydrate is bound by residues Asn-156 and His-178. Asp-181 is a Ca(2+) binding site. Cys-190 and Cys-230 are disulfide-bonded. 251–253 (GGL) contacts a carbohydrate. Ser-425 is subject to Phosphoserine. The helical transmembrane segment at 478–498 (TVHFIIFVVVQTVLFIGYIMY) threads the bilayer. The Cytoplasmic segment spans residues 499 to 510 (RSQQEAAAKKFF). Positions 499–510 (RSQQEAAAKKFF) are mediates interaction with RAB3GAP1, RAB3GAP2 and UBXN6. The short motif at 509–510 (FF) is the ER export motif element.

Exists both as a covalent disulfide-linked homohexamer, and a complex of three disulfide-linked dimers non-covalently kept together. Interacts with MCFD2. May interact with TMEM115. Interacts with RAB3GAP1 and RAB3GAP2. Interacts with UBXN6. Interacts with SERPINA1/alpha1-antitrypsin. Interacts with BET1.

The protein resides in the endoplasmic reticulum-Golgi intermediate compartment membrane. Its subcellular location is the golgi apparatus membrane. The protein localises to the endoplasmic reticulum membrane. Functionally, mannose-specific lectin. May recognize sugar residues of glycoproteins, glycolipids, or glycosylphosphatidyl inositol anchors and may be involved in the sorting or recycling of proteins, lipids, or both. The LMAN1-MCFD2 complex forms a specific cargo receptor for the ER-to-Golgi transport of selected proteins. In Chlorocebus aethiops (Green monkey), this protein is Protein ERGIC-53 (LMAN1).